Here is a 368-residue protein sequence, read N- to C-terminus: MTDNVLKLSRKNIKKLIPYQSARRIGGEHGNILLNANESPVSIFFKLKKKPFNRYPECQPSKLISSYAHYVNLSCNQILATRGADEGIELLIKAFCEPGKDAIIYCPPTYDMYRINATIAGVEIKEIPTIKNTWQLDLLNIKLNLSRVKLIYICNPNNPTGNIFFKKDLIFLLNITLGQALVVIDEAYIEFSPEESMTNYLKDYPNLVVLRTLSKAFALAGIRCGFTLAKKEIIQTLSKVISPYPISIPVSDIAIRSLEKDYVQLMKNRVLDSNNNRIWLINQLKNITCVETVFESNANYVLVKFSMFEKVFETLWNKGIILRNQNEKMNLKKCIRISMGTRSESLRLIKELKIFSKKNMCQGEMSEK.

K215 is subject to N6-(pyridoxal phosphate)lysine.

Belongs to the class-II pyridoxal-phosphate-dependent aminotransferase family. Histidinol-phosphate aminotransferase subfamily. Homodimer. The cofactor is pyridoxal 5'-phosphate.

The catalysed reaction is L-histidinol phosphate + 2-oxoglutarate = 3-(imidazol-4-yl)-2-oxopropyl phosphate + L-glutamate. Its pathway is amino-acid biosynthesis; L-histidine biosynthesis; L-histidine from 5-phospho-alpha-D-ribose 1-diphosphate: step 7/9. The polypeptide is Histidinol-phosphate aminotransferase (Buchnera aphidicola subsp. Acyrthosiphon pisum (strain 5A)).